The sequence spans 841 residues: Protein translocase subunit SecA (841 aa).

Residues Q85, 103-107 (GEGKT), and D492 contribute to the ATP site. Residues 790–814 (IQGQTTAHQPKEGDEEKQAKKKPVR) form a disordered region. Residues 798 to 807 (QPKEGDEEKQ) are compositionally biased toward basic and acidic residues. Residues C825, C827, C836, and C837 each contribute to the Zn(2+) site.

Belongs to the SecA family. As to quaternary structure, monomer and homodimer. Part of the essential Sec protein translocation apparatus which comprises SecA, SecYEG and auxiliary proteins SecDF. Other proteins may also be involved. Zn(2+) is required as a cofactor.

The protein resides in the cell membrane. The protein localises to the cytoplasm. The enzyme catalyses ATP + H2O + cellular proteinSide 1 = ADP + phosphate + cellular proteinSide 2.. Functionally, part of the Sec protein translocase complex. Interacts with the SecYEG preprotein conducting channel. Has a central role in coupling the hydrolysis of ATP to the transfer of proteins into and across the cell membrane, serving as an ATP-driven molecular motor driving the stepwise translocation of polypeptide chains across the membrane. The sequence is that of Protein translocase subunit SecA from Bacillus licheniformis (strain ATCC 14580 / DSM 13 / JCM 2505 / CCUG 7422 / NBRC 12200 / NCIMB 9375 / NCTC 10341 / NRRL NRS-1264 / Gibson 46).